The following is a 326-amino-acid chain: N-acetyl-gamma-glutamyl-phosphate reductase (326 aa).

Cys155 is an active-site residue.

The protein belongs to the NAGSA dehydrogenase family. Type 1 subfamily.

The protein resides in the cytoplasm. It catalyses the reaction N-acetyl-L-glutamate 5-semialdehyde + phosphate + NADP(+) = N-acetyl-L-glutamyl 5-phosphate + NADPH + H(+). The protein operates within amino-acid biosynthesis; L-arginine biosynthesis; N(2)-acetyl-L-ornithine from L-glutamate: step 3/4. In terms of biological role, catalyzes the NADPH-dependent reduction of N-acetyl-5-glutamyl phosphate to yield N-acetyl-L-glutamate 5-semialdehyde. This Shewanella baltica (strain OS155 / ATCC BAA-1091) protein is N-acetyl-gamma-glutamyl-phosphate reductase.